A 491-amino-acid chain; its full sequence is Alpha-2-antiplasmin (491 aa).

An N-terminal signal peptide occupies residues 1–27; that stretch reads MALLRGLLVLSLSCLQGPCFTFSPVSA. Residues 28 to 39 constitute a propeptide that is removed on maturation; the sequence is VDLPGQQPVSEQ. A disulfide bond links cysteine 70 and cysteine 143. Asparagine 126, asparagine 295, asparagine 309, and asparagine 316 each carry an N-linked (GlcNAc...) asparagine glycan. The tract at residues 439–491 is disordered; the sequence is SALPQLQEQRDSPDNRLIGQNDKADFHGGKTFGPDLKLAPRMEEDYPQFSSPK. The residue at position 484 (tyrosine 484) is a Sulfotyrosine.

Belongs to the serpin family. Forms protease inhibiting heterodimer with TMPRSS7. Proteolytically cleaved at Pro-35 by both the prolyl endopeptidase FAP form and antiplasmin-cleaving enzyme FAP soluble form to generate mature alpha-2-antiplasmin. Expressed by the liver and secreted in plasma.

The protein resides in the secreted. Functionally, serine protease inhibitor. The major targets of this inhibitor are plasmin and trypsin, but it also inactivates matriptase-3/TMPRSS7 and chymotrypsin. The chain is Alpha-2-antiplasmin (Serpinf2) from Mus musculus (Mouse).